A 286-amino-acid polypeptide reads, in one-letter code: tRNA (guanine-N(7)-)-methyltransferase (286 aa).

Positions 91, 116, 143, and 165 each coordinate S-adenosyl-L-methionine. The active site involves Asp-165. Substrate contacts are provided by residues Lys-169, Asp-201, and 262-265; that span reads TNFE.

It belongs to the class I-like SAM-binding methyltransferase superfamily. TrmB family.

It catalyses the reaction guanosine(46) in tRNA + S-adenosyl-L-methionine = N(7)-methylguanosine(46) in tRNA + S-adenosyl-L-homocysteine. It participates in tRNA modification; N(7)-methylguanine-tRNA biosynthesis. Its function is as follows. Catalyzes the formation of N(7)-methylguanine at position 46 (m7G46) in tRNA. This is tRNA (guanine-N(7)-)-methyltransferase from Bifidobacterium longum subsp. infantis (strain ATCC 15697 / DSM 20088 / JCM 1222 / NCTC 11817 / S12).